A 276-amino-acid polypeptide reads, in one-letter code: Probable ABC transporter permease protein PH1036 (276 aa).

6 helical membrane passes run 12-32, 75-95, 109-129, 137-157, 186-206, and 241-261; these read IAWS…MASV, IVAI…AYAF, FIVL…YFLL, TFRG…IFFM, IVLP…FTWV, and GLLT…YALF. Residues 70–261 enclose the ABC transmembrane type-1 domain; that stretch reads LKNSLIVAIP…LVPLLVYALF (192 aa).

The protein belongs to the binding-protein-dependent transport system permease family. MalFG subfamily.

Its subcellular location is the cell membrane. Probably part of a binding-protein-dependent transport system PH1036/38/39. Probably responsible for the translocation of the substrate across the membrane. The chain is Probable ABC transporter permease protein PH1036 from Pyrococcus horikoshii (strain ATCC 700860 / DSM 12428 / JCM 9974 / NBRC 100139 / OT-3).